A 540-amino-acid chain; its full sequence is Chaperonin GroEL (540 aa).

ATP contacts are provided by residues 29–32 (TIGP), 86–90 (DGTTT), Gly413, 476–478 (NAA), and Asp492.

Belongs to the chaperonin (HSP60) family. In terms of assembly, forms a cylinder of 14 subunits composed of two heptameric rings stacked back-to-back. Interacts with the co-chaperonin GroES.

The protein resides in the cytoplasm. The catalysed reaction is ATP + H2O + a folded polypeptide = ADP + phosphate + an unfolded polypeptide.. Its function is as follows. Together with its co-chaperonin GroES, plays an essential role in assisting protein folding. The GroEL-GroES system forms a nano-cage that allows encapsulation of the non-native substrate proteins and provides a physical environment optimized to promote and accelerate protein folding. The protein is Chaperonin GroEL of Staphylococcus carnosus (strain TM300).